We begin with the raw amino-acid sequence, 87 residues long: Small ribosomal subunit protein bS18B (87 aa).

It belongs to the bacterial ribosomal protein bS18 family. As to quaternary structure, part of the 30S ribosomal subunit. Forms a tight heterodimer with protein bS6.

In terms of biological role, binds as a heterodimer with protein bS6 to the central domain of the 16S rRNA, where it helps stabilize the platform of the 30S subunit. The sequence is that of Small ribosomal subunit protein bS18B from Mycobacterium marinum (strain ATCC BAA-535 / M).